A 541-amino-acid polypeptide reads, in one-letter code: Glutamyl-tRNA(Gln) amidotransferase subunit B, mitochondrial (541 aa).

This sequence belongs to the GatB/GatE family. GatB subfamily. As to quaternary structure, subunit of the heterotrimeric GatFAB amidotransferase (AdT) complex, composed of A, B and F subunits.

The protein resides in the mitochondrion. It catalyses the reaction L-glutamyl-tRNA(Gln) + L-glutamine + ATP + H2O = L-glutaminyl-tRNA(Gln) + L-glutamate + ADP + phosphate + H(+). Allows the formation of correctly charged Gln-tRNA(Gln) through the transamidation of misacylated Glu-tRNA(Gln) in the mitochondria. The reaction takes place in the presence of glutamine and ATP through an activated gamma-phospho-Glu-tRNA(Gln). The chain is Glutamyl-tRNA(Gln) amidotransferase subunit B, mitochondrial from Saccharomyces cerevisiae (strain RM11-1a) (Baker's yeast).